A 490-amino-acid chain; its full sequence is Selenium-binding protein 1 (490 aa).

At Ala2 the chain carries N-acetylalanine. The selenite site is built by Cys21 and Cys22.

Belongs to the selenium-binding protein family. Interacts with GRXS14 and GRXS16. Interacts with DALL3. As to expression, expressed in seedlings, roots, leaves, stems and flowers.

Its function is as follows. Binds cadmium and mediates lower sensitivity to stress requiring glutathione (GSH) for tolerance (e.g. cadmium, selenate, and hydrogen peroxide excess). Probably helps to detoxify cadmium potentially through direct binding. Binds selenium, cadmium, zinc and nickel in vitro. In Arabidopsis thaliana (Mouse-ear cress), this protein is Selenium-binding protein 1.